A 351-amino-acid chain; its full sequence is Probable E3 ubiquitin-protein ligase sinah (351 aa).

The interval 1 to 38 (MSVRNSRPQLSWPERVSPQRTIDTPTASGEMLTRRQSA) is disordered. A compositionally biased stretch (polar residues) spans 18–27 (PQRTIDTPTA). The RING-type zinc finger occupies 106–141 (CPVCFGYIMPPIMQCPRGHLICSTCRSKLTICPVCR). The SBD stretch occupies residues 155-346 (VASKLIFPCK…LALNVVIRKV (192 aa)). The SIAH-type zinc-finger motif lies at 158-218 (KLIFPCKHSH…VYQHLMSSHE (61 aa)). 8 residues coordinate Zn(2+): Cys163, Cys170, His182, Cys186, Cys193, Cys200, His212, and His217.

The protein belongs to the SINA (Seven in absentia) family. As to quaternary structure, interacts with ebi and phyl.

The enzyme catalyses S-ubiquitinyl-[E2 ubiquitin-conjugating enzyme]-L-cysteine + [acceptor protein]-L-lysine = [E2 ubiquitin-conjugating enzyme]-L-cysteine + N(6)-ubiquitinyl-[acceptor protein]-L-lysine.. The protein operates within protein modification; protein ubiquitination. Its function is as follows. E3 ubiquitin-protein ligase that mediates ubiquitination and subsequent proteasomal degradation of target proteins. The adapter phyl is required to direct the degradation of the two isoforms of the transcriptional repressor Tramtrack (Ttk). E3 ubiquitin ligases accept ubiquitin from an E2 ubiquitin-conjugating enzyme in the form of a thioester and then directly transfers the ubiquitin to targeted substrates. It probably triggers the ubiquitin-mediated degradation of different substrates. A phyl-independent mechanism of degradation exists for isoform beta of ttk that involves motifs in the C-terminus of ttk. The protein is Probable E3 ubiquitin-protein ligase sinah (sinah) of Drosophila melanogaster (Fruit fly).